A 167-amino-acid polypeptide reads, in one-letter code: Urease accessory protein UreE (167 aa).

The protein belongs to the UreE family.

It is found in the cytoplasm. Involved in urease metallocenter assembly. Binds nickel. Probably functions as a nickel donor during metallocenter assembly. The sequence is that of Urease accessory protein UreE from Pseudomonas aeruginosa (strain LESB58).